The following is a 230-amino-acid chain: Large ribosomal subunit protein uL1 (230 aa).

This sequence belongs to the universal ribosomal protein uL1 family. Part of the 50S ribosomal subunit.

Binds directly to 23S rRNA. The L1 stalk is quite mobile in the ribosome, and is involved in E site tRNA release. In terms of biological role, protein L1 is also a translational repressor protein, it controls the translation of the L11 operon by binding to its mRNA. The sequence is that of Large ribosomal subunit protein uL1 from Nitrobacter winogradskyi (strain ATCC 25391 / DSM 10237 / CIP 104748 / NCIMB 11846 / Nb-255).